A 511-amino-acid polypeptide reads, in one-letter code: Synaptotagmin-6 (511 aa).

The Vesicular portion of the chain corresponds to 1–59 (MSGVWGAGGPRCQAALAVLASLCRARPPPLGLDVETCRSFELQSPEQSPSAADSGTSVS). Positions 12–38 (CQAALAVLASLCRARPPPLGLDVETCR) are cysteine motif. The chain crosses the membrane as a helical span at residues 60–80 (LLAVVVIVCGVALVAVFLFLF). The Cytoplasmic portion of the chain corresponds to 81–511 (WKLCWMPWRK…KSFKEGTPRL (431 aa)). Disordered stretches follow at residues 92-119 (EASSPSSANPASETLQSPSSRGNMADKL) and 157-182 (TKLQRQTTEPASSTRHTSFKRHLPRQ). The span at 94-103 (SSPSSANPAS) shows a compositional bias: low complexity. Polar residues-rich tracts occupy residues 104–113 (ETLQSPSSRG) and 160–172 (QRQTTEPASSTRH). Ser-217 is subject to Phosphoserine. C2 domains are found at residues 230 to 351 (SCGK…SIWK) and 362 to 495 (DLGE…AHWH). The Ca(2+) site is built by Asp-261, Asp-267, Asp-319, Phe-320, Asp-321, Ser-324, Asp-327, Asp-393, Asp-399, Asp-453, and Asp-455. Residues 483–511 (MLAYPRKPIAHWHSLVEVKKSFKEGTPRL) form a necessary for cell membrane association (isoform 2) region.

It belongs to the synaptotagmin family. As to quaternary structure, isoform 1: Homodimer; disulfide-linked via the cysteine motif. Isoform 1: Can also form heterodimers with SYT3, SYT7, SYT9 and SYT10. Isoform 1: Interacts with STX1A, STX1B and STX2; the interaction is Ca(2+)-dependent. Isoform 2: Is not able to form homodimer and heterodimers. Ca(2+) is required as a cofactor. As to expression, isoform 1 is expressed in the olfactory bulb. Isoform 2 is expressed in the brain (at protein level).

It is found in the cytoplasmic vesicle. The protein resides in the secretory vesicle. The protein localises to the synaptic vesicle membrane. Its subcellular location is the membrane. It localises to the cytoplasm. It is found in the cytosol. The protein resides in the cell membrane. Its function is as follows. May be involved in Ca(2+)-dependent exocytosis of secretory vesicles through Ca(2+) and phospholipid binding to the C2 domain or may serve as Ca(2+) sensors in the process of vesicular trafficking and exocytosis. May mediate Ca(2+)-regulation of exocytosis in acrosomal reaction in sperm. This chain is Synaptotagmin-6 (Syt6), found in Mus musculus (Mouse).